The chain runs to 443 residues: Cell division protein FtsA (443 aa).

It belongs to the FtsA/MreB family. In terms of assembly, self-interacts. Interacts with FtsZ.

It localises to the cell inner membrane. Cell division protein that is involved in the assembly of the Z ring. May serve as a membrane anchor for the Z ring. The chain is Cell division protein FtsA from Agrobacterium fabrum (strain C58 / ATCC 33970) (Agrobacterium tumefaciens (strain C58)).